Reading from the N-terminus, the 352-residue chain is D-alanine--D-alanine ligase (352 aa).

The 210-residue stretch at Lys-133–Gln-342 folds into the ATP-grasp domain. Asp-169–Glu-224 contacts ATP. Mg(2+) is bound by residues Asp-295, Glu-309, and Asn-311.

Belongs to the D-alanine--D-alanine ligase family. Mg(2+) serves as cofactor. It depends on Mn(2+) as a cofactor.

The protein resides in the cytoplasm. The enzyme catalyses 2 D-alanine + ATP = D-alanyl-D-alanine + ADP + phosphate + H(+). It participates in cell wall biogenesis; peptidoglycan biosynthesis. Functionally, cell wall formation. In Acaryochloris marina (strain MBIC 11017), this protein is D-alanine--D-alanine ligase.